The sequence spans 292 residues: MAKTASAMLFLYLLLSRCLLSHAFQEFITKFPMPMMYNFPSCSSTIPSTCRNETAIADTCCFEYPGGLILHSQFWNAPYRKRSYRDFGPDDSFTIHGLWNDRCDGSWDQFCRRGSSIRSVVDILSKDSLNRGGLPITGKALLRQMSMYWKGDRGDENLWVHEYNKHGLCLNTLRPECYQRWGSVASAEDQAIYDYFRIAMNLHLKIDAYHALSRQGIKPRCDAPYDAVRMQNALADDFGREVQMQCTGNRLTGVTYYYLLRGGILSENFQPVDPTQSSSCRGKIYWIPKSGC.

The signal sequence occupies residues 1-23 (MAKTASAMLFLYLLLSRCLLSHA). 5 disulfide bridges follow: cysteine 42–cysteine 61, cysteine 50–cysteine 103, cysteine 60–cysteine 177, cysteine 111–cysteine 169, and cysteine 246–cysteine 280. The N-linked (GlcNAc...) asparagine glycan is linked to asparagine 52. Active-site residues include histidine 96, glutamate 162, and histidine 166.

It belongs to the RNase T2 family.

It localises to the vacuole lumen. The protein resides in the cytoplasm. It carries out the reaction a ribonucleotidyl-ribonucleotide-RNA + H2O = a 3'-end 3'-phospho-ribonucleotide-RNA + a 5'-end dephospho-ribonucleoside-RNA + H(+). Functionally, rnase which modulates cell survival under stress conditions. Released from the vacuole to the cytoplasm during stress to promote tRNA and rRNA cleavage and to activate separately a downstream pathway that promotes cell death. Involved in cell size, vacuolar morphology and growth at high temperatures and high salt concentration. This is Ribonuclease T2-like (RNY1) from Eremothecium gossypii (strain ATCC 10895 / CBS 109.51 / FGSC 9923 / NRRL Y-1056) (Yeast).